Here is a 129-residue protein sequence, read N- to C-terminus: Ribosome-binding factor A (129 aa).

It belongs to the RbfA family. As to quaternary structure, monomer. Binds 30S ribosomal subunits, but not 50S ribosomal subunits or 70S ribosomes.

The protein resides in the cytoplasm. One of several proteins that assist in the late maturation steps of the functional core of the 30S ribosomal subunit. Associates with free 30S ribosomal subunits (but not with 30S subunits that are part of 70S ribosomes or polysomes). Required for efficient processing of 16S rRNA. May interact with the 5'-terminal helix region of 16S rRNA. This Ectopseudomonas mendocina (strain ymp) (Pseudomonas mendocina) protein is Ribosome-binding factor A.